The following is a 1335-amino-acid chain: Xanthine dehydrogenase/oxidase (1335 aa).

The 88-residue stretch at 7–94 (DELVFFVNGK…HVAVTTVEGI (88 aa)) folds into the 2Fe-2S ferredoxin-type domain. 8 residues coordinate [2Fe-2S] cluster: Cys46, Cys51, Cys54, Cys76, Cys115, Cys118, Cys150, and Cys152. The region spanning 231–416 (FEGERVTWIQ…VSIVIPYSRK (186 aa)) is the FAD-binding PCMH-type domain. FAD-binding positions include 259-266 (LVVGNTEI), Phe339, 349-353 (SIGGN), Asp362, Leu406, and Lys424. Residues Cys538 and Cys995 are joined by a disulfide bond. Mo-molybdopterin contacts are provided by Gln770 and Phe801. Substrate is bound by residues Glu805 and Arg883. Position 915 (Arg915) interacts with Mo-molybdopterin. The substrate site is built by Phe917 and Thr1013. Position 1082 (Ala1082) interacts with Mo-molybdopterin. Glu1264 acts as the Proton acceptor in catalysis.

This sequence belongs to the xanthine dehydrogenase family. Homodimer. Interacts with BTN1A1. Requires FAD as cofactor. It depends on Mo-molybdopterin as a cofactor. [2Fe-2S] cluster serves as cofactor. In terms of processing, subject to partial proteolysis; this alters the enzyme from the dehydrogenase form (D) to the oxidase form (O). Contains sulfhydryl groups that are easily oxidized (in vitro); this alters the enzyme from the dehydrogenase form (D) to the oxidase form (O).

Its subcellular location is the cytoplasm. It is found in the peroxisome. The protein resides in the secreted. The catalysed reaction is xanthine + NAD(+) + H2O = urate + NADH + H(+). It carries out the reaction hypoxanthine + NAD(+) + H2O = xanthine + NADH + H(+). The enzyme catalyses xanthine + O2 + H2O = urate + H2O2. Its activity is regulated as follows. Can be converted from the dehydrogenase form (D) to the oxidase form (O) irreversibly by proteolysis or reversibly through the oxidation of sulfhydryl groups. Its function is as follows. Key enzyme in purine degradation. Catalyzes the oxidation of hypoxanthine to xanthine. Catalyzes the oxidation of xanthine to uric acid. Contributes to the generation of reactive oxygen species. The protein is Xanthine dehydrogenase/oxidase (Xdh) of Mus musculus (Mouse).